The primary structure comprises 253 residues: Claudin domain-containing protein 1 (253 aa).

Residues 5 to 25 (FATAFVIACVLSLISTIYMAA) traverse the membrane as a helical segment. Residues asparagine 42 and asparagine 72 are each glycosylated (N-linked (GlcNAc...) asparagine). A run of 3 helical transmembrane segments spans residues 141 to 161 (FLLP…GLCA), 175 to 195 (ILHL…VAGI), and 216 to 236 (FCLA…FIWA).

Belongs to the PMP-22/EMP/MP20 family. Widely distributed in the adult CNS with highest expression in the corpus callosum, caudate nucleus, cerebral cortex, medulla, putamen, spinal cord, substantia nigra and subthalamic nucleus. Weak expression was detected in the adult heart.

It is found in the cell junction. The protein localises to the tight junction. Its subcellular location is the cell membrane. Its function is as follows. Plays a role in negatively regulating the permeability of cells to small molecules. In Homo sapiens (Human), this protein is Claudin domain-containing protein 1 (CLDND1).